The primary structure comprises 220 residues: uncharacterized protein (220 aa).

A helical transmembrane segment spans residues 20 to 42 (FFKKLVPIIIIISIVVITIMVII).

It is found in the membrane. This is an uncharacterized protein from Rickettsia prowazekii (strain Madrid E).